A 378-amino-acid polypeptide reads, in one-letter code: 4-hydroxy-3-methylbut-2-en-1-yl diphosphate synthase (flavodoxin) (378 aa).

Residues Cys268, Cys271, Cys303, and Glu310 each coordinate [4Fe-4S] cluster. The tract at residues Ala359–Gln378 is disordered.

The protein belongs to the IspG family. [4Fe-4S] cluster serves as cofactor.

It catalyses the reaction (2E)-4-hydroxy-3-methylbut-2-enyl diphosphate + oxidized [flavodoxin] + H2O + 2 H(+) = 2-C-methyl-D-erythritol 2,4-cyclic diphosphate + reduced [flavodoxin]. The protein operates within isoprenoid biosynthesis; isopentenyl diphosphate biosynthesis via DXP pathway; isopentenyl diphosphate from 1-deoxy-D-xylulose 5-phosphate: step 5/6. Converts 2C-methyl-D-erythritol 2,4-cyclodiphosphate (ME-2,4cPP) into 1-hydroxy-2-methyl-2-(E)-butenyl 4-diphosphate. The protein is 4-hydroxy-3-methylbut-2-en-1-yl diphosphate synthase (flavodoxin) of Bacillus cereus (strain ZK / E33L).